The following is a 96-amino-acid chain: Phosphoribosyl-ATP pyrophosphatase (96 aa).

Belongs to the PRA-PH family.

It is found in the cytoplasm. The enzyme catalyses 1-(5-phospho-beta-D-ribosyl)-ATP + H2O = 1-(5-phospho-beta-D-ribosyl)-5'-AMP + diphosphate + H(+). It participates in amino-acid biosynthesis; L-histidine biosynthesis; L-histidine from 5-phospho-alpha-D-ribose 1-diphosphate: step 2/9. This is Phosphoribosyl-ATP pyrophosphatase from Methanococcus maripaludis (strain DSM 14266 / JCM 13030 / NBRC 101832 / S2 / LL).